A 525-amino-acid polypeptide reads, in one-letter code: UPF0288 protein MM_0912 (525 aa).

This sequence belongs to the UPF0288 family.

The chain is UPF0288 protein MM_0912 from Methanosarcina mazei (strain ATCC BAA-159 / DSM 3647 / Goe1 / Go1 / JCM 11833 / OCM 88) (Methanosarcina frisia).